A 793-amino-acid chain; its full sequence is Phenylalanine--tRNA ligase beta subunit (793 aa).

The tRNA-binding domain occupies 39–154; the sequence is TCSFSSIITA…ENTPLGESAC (116 aa). Residues 403 to 481 enclose the B5 domain; sequence PQASTLSFRT…QPWKVENKKA (79 aa). Asp457, Asp463, Glu466, and Glu467 together coordinate Mg(2+). Residues 697-793 form the FDX-ACB domain; sequence PIYPSSFRDI…QINDTKGTID (97 aa).

Belongs to the phenylalanyl-tRNA synthetase beta subunit family. Type 1 subfamily. Tetramer of two alpha and two beta subunits. It depends on Mg(2+) as a cofactor.

Its subcellular location is the cytoplasm. It carries out the reaction tRNA(Phe) + L-phenylalanine + ATP = L-phenylalanyl-tRNA(Phe) + AMP + diphosphate + H(+). The polypeptide is Phenylalanine--tRNA ligase beta subunit (Chlamydia caviae (strain ATCC VR-813 / DSM 19441 / 03DC25 / GPIC) (Chlamydophila caviae)).